The chain runs to 201 residues: Holliday junction resolvase RecU (201 aa).

Positions 87, 89, 102, and 121 each coordinate Mg(2+).

It belongs to the RecU family. The cofactor is Mg(2+).

The protein resides in the cytoplasm. The catalysed reaction is Endonucleolytic cleavage at a junction such as a reciprocal single-stranded crossover between two homologous DNA duplexes (Holliday junction).. Endonuclease that resolves Holliday junction intermediates in genetic recombination. Cleaves mobile four-strand junctions by introducing symmetrical nicks in paired strands. Promotes annealing of linear ssDNA with homologous dsDNA. Required for DNA repair, homologous recombination and chromosome segregation. This Listeria monocytogenes serotype 4b (strain F2365) protein is Holliday junction resolvase RecU.